The following is an 829-amino-acid chain: Periplasmic nitrate reductase (829 aa).

A signal peptide (tat-type signal) is located at residues 1-29 (MKMTRRAFVKANAAASAAAVAGITLPASA). Positions 41 to 97 (ITWDKAPCRFCGTGCSVLVGTQNGKVVATQGDPEAPVNKGLNCIKGYFLSKIMYGQD) constitute a 4Fe-4S Mo/W bis-MGD-type domain. Positions 48, 51, 55, and 83 each coordinate [4Fe-4S] cluster. Residues lysine 85, glutamine 152, asparagine 177, cysteine 181, 214–221 (WGSNMAEM), 245–249 (STYYH), 264–266 (QSD), methionine 374, glutamine 378, asparagine 484, 510–511 (SD), lysine 533, aspartate 560, and 718–727 (TGRVLEHWHT) each bind Mo-bis(molybdopterin guanine dinucleotide). Phenylalanine 794 is a substrate binding site. Positions 802 and 819 each coordinate Mo-bis(molybdopterin guanine dinucleotide).

Belongs to the prokaryotic molybdopterin-containing oxidoreductase family. NasA/NapA/NarB subfamily. Component of the periplasmic nitrate reductase NapAB complex composed of NapA and NapB. [4Fe-4S] cluster serves as cofactor. Mo-bis(molybdopterin guanine dinucleotide) is required as a cofactor. Predicted to be exported by the Tat system. The position of the signal peptide cleavage has not been experimentally proven.

It is found in the periplasm. It catalyses the reaction 2 Fe(II)-[cytochrome] + nitrate + 2 H(+) = 2 Fe(III)-[cytochrome] + nitrite + H2O. Functionally, catalytic subunit of the periplasmic nitrate reductase complex NapAB. Receives electrons from NapB and catalyzes the reduction of nitrate to nitrite. The protein is Periplasmic nitrate reductase of Vibrio campbellii (strain ATCC BAA-1116).